The sequence spans 104 residues: uncharacterized protein (104 aa).

Disordered regions lie at residues 1–48 (MLRR…NNQP) and 66–104 (QENT…RRCS).

This is an uncharacterized protein from Saccharomyces cerevisiae (strain ATCC 204508 / S288c) (Baker's yeast).